The chain runs to 421 residues: 4-hydroxy-3-methylbut-2-en-1-yl diphosphate synthase (flavodoxin) (421 aa).

[4Fe-4S] cluster-binding residues include cysteine 298, cysteine 301, cysteine 344, and glutamate 351.

Belongs to the IspG family. The cofactor is [4Fe-4S] cluster.

It catalyses the reaction (2E)-4-hydroxy-3-methylbut-2-enyl diphosphate + oxidized [flavodoxin] + H2O + 2 H(+) = 2-C-methyl-D-erythritol 2,4-cyclic diphosphate + reduced [flavodoxin]. It functions in the pathway isoprenoid biosynthesis; isopentenyl diphosphate biosynthesis via DXP pathway; isopentenyl diphosphate from 1-deoxy-D-xylulose 5-phosphate: step 5/6. Functionally, converts 2C-methyl-D-erythritol 2,4-cyclodiphosphate (ME-2,4cPP) into 1-hydroxy-2-methyl-2-(E)-butenyl 4-diphosphate. The polypeptide is 4-hydroxy-3-methylbut-2-en-1-yl diphosphate synthase (flavodoxin) (Neisseria meningitidis serogroup C (strain 053442)).